Here is a 405-residue protein sequence, read N- to C-terminus: Probable dual specificity protein kinase YAK1 homolog (405 aa).

The Protein kinase domain occupies 40–335; that stretch reads YMIIDMLGTG…AKSLASHSYL (296 aa). ATP is bound by residues 46-54 and Lys-68; that span reads LGTGTFGQV. Asp-163 (proton acceptor) is an active-site residue.

It belongs to the protein kinase superfamily. CMGC Ser/Thr protein kinase family. MNB/DYRK subfamily.

It is found in the cytoplasm. The protein localises to the nucleus. It catalyses the reaction L-seryl-[protein] + ATP = O-phospho-L-seryl-[protein] + ADP + H(+). The catalysed reaction is L-threonyl-[protein] + ATP = O-phospho-L-threonyl-[protein] + ADP + H(+). It carries out the reaction L-tyrosyl-[protein] + ATP = O-phospho-L-tyrosyl-[protein] + ADP + H(+). Functionally, negative regulator of the cell cycle acting downstream of the cAMP-dependent protein kinase. Part of a glucose-sensing system involved in growth control in response to glucose availability. This Encephalitozoon cuniculi (strain GB-M1) (Microsporidian parasite) protein is Probable dual specificity protein kinase YAK1 homolog (YAK1).